The primary structure comprises 116 residues: NADPH-dependent 7-cyano-7-deazaguanine reductase (116 aa).

The Thioimide intermediate role is filled by Cys31. Residue Asp38 is the Proton donor of the active site. Residues 53–55 (IEL) and 72–73 (YE) each bind substrate.

The protein belongs to the GTP cyclohydrolase I family. QueF type 1 subfamily.

It localises to the cytoplasm. The catalysed reaction is 7-aminomethyl-7-carbaguanine + 2 NADP(+) = 7-cyano-7-deazaguanine + 2 NADPH + 3 H(+). It participates in tRNA modification; tRNA-queuosine biosynthesis. Catalyzes the NADPH-dependent reduction of 7-cyano-7-deazaguanine (preQ0) to 7-aminomethyl-7-deazaguanine (preQ1). This Chlorobaculum parvum (strain DSM 263 / NCIMB 8327) (Chlorobium vibrioforme subsp. thiosulfatophilum) protein is NADPH-dependent 7-cyano-7-deazaguanine reductase.